The primary structure comprises 60 residues: Homeobox protein EgHBX4 (60 aa).

Positions 1–60 (SRRERTIYTPEQLEAMEEVFGVNRYPDVSMREELASRLGINESKIQVWFKNRRAKLRNLE) form a DNA-binding region, homeobox.

This sequence belongs to the paired homeobox family. Bicoid subfamily.

Its subcellular location is the nucleus. This is Homeobox protein EgHBX4 (HBX4) from Echinococcus granulosus (Hydatid tapeworm).